The chain runs to 413 residues: Lipoyl synthase, mitochondrial (413 aa).

The transit peptide at 1-33 (MAAATNRFRALYSSSRVATPQAGSASYLSYRGY) directs the protein to the mitochondrion. 7 residues coordinate [4Fe-4S] cluster: Cys133, Cys138, Cys144, Cys164, Cys168, Cys171, and Ser379. The region spanning 147–368 (GGDKAAATAT…RQRALDMGFL (222 aa)) is the Radical SAM core domain.

It belongs to the radical SAM superfamily. Lipoyl synthase family. Requires [4Fe-4S] cluster as cofactor.

The protein localises to the mitochondrion. The catalysed reaction is [[Fe-S] cluster scaffold protein carrying a second [4Fe-4S](2+) cluster] + N(6)-octanoyl-L-lysyl-[protein] + 2 oxidized [2Fe-2S]-[ferredoxin] + 2 S-adenosyl-L-methionine + 4 H(+) = [[Fe-S] cluster scaffold protein] + N(6)-[(R)-dihydrolipoyl]-L-lysyl-[protein] + 4 Fe(3+) + 2 hydrogen sulfide + 2 5'-deoxyadenosine + 2 L-methionine + 2 reduced [2Fe-2S]-[ferredoxin]. It functions in the pathway protein modification; protein lipoylation via endogenous pathway; protein N(6)-(lipoyl)lysine from octanoyl-[acyl-carrier-protein]: step 2/2. Its function is as follows. Catalyzes the radical-mediated insertion of two sulfur atoms into the C-6 and C-8 positions of the octanoyl moiety bound to the lipoyl domains of lipoate-dependent enzymes, thereby converting the octanoylated domains into lipoylated derivatives. The chain is Lipoyl synthase, mitochondrial from Emericella nidulans (strain FGSC A4 / ATCC 38163 / CBS 112.46 / NRRL 194 / M139) (Aspergillus nidulans).